Here is a 425-residue protein sequence, read N- to C-terminus: E3 ubiquitin-protein ligase GW2 (425 aa).

Residues 62 to 105 (CPICFLYYPSLNRSKCCSKGICTECFLQMKPTHTAQPTQCPFCK) form an RING-type; degenerate zinc finger.

As to expression, expressed in roots, shoots, leaves, inflorescence meristems, stamens, pistils, spikelet hulls and endosperms 4 days after fertilization.

The protein resides in the cytoplasm. It catalyses the reaction S-ubiquitinyl-[E2 ubiquitin-conjugating enzyme]-L-cysteine + [acceptor protein]-L-lysine = [E2 ubiquitin-conjugating enzyme]-L-cysteine + N(6)-ubiquitinyl-[acceptor protein]-L-lysine.. Its pathway is protein modification; protein ubiquitination. E3 ubiquitin-protein ligase involved in the regulation of grain size. May limit grain width and weight by restricting cell proliferation of the spikelet hull. Possesses E3 ubiquitin-protein ligase activity in vitro. The polypeptide is E3 ubiquitin-protein ligase GW2 (Oryza sativa subsp. indica (Rice)).